A 280-amino-acid chain; its full sequence is Large ribosomal subunit protein uL2 (280 aa).

A disordered region spans residues 213–280; that stretch reads RWKGKRPSVR…RRRTGKKHAR (68 aa). Over residues 268–280 the composition is skewed to basic residues; that stretch reads IVRRRRTGKKHAR.

Belongs to the universal ribosomal protein uL2 family. As to quaternary structure, part of the 50S ribosomal subunit. Forms a bridge to the 30S subunit in the 70S ribosome.

Its function is as follows. One of the primary rRNA binding proteins. Required for association of the 30S and 50S subunits to form the 70S ribosome, for tRNA binding and peptide bond formation. It has been suggested to have peptidyltransferase activity; this is somewhat controversial. Makes several contacts with the 16S rRNA in the 70S ribosome. This chain is Large ribosomal subunit protein uL2, found in Mycobacterium leprae (strain Br4923).